A 547-amino-acid polypeptide reads, in one-letter code: Probable hydroxyacid-oxoacid transhydrogenase, mitochondrial (547 aa).

It belongs to the iron-containing alcohol dehydrogenase family. Hydroxyacid-oxoacid transhydrogenase subfamily.

The protein resides in the mitochondrion. The catalysed reaction is (S)-3-hydroxybutanoate + 2-oxoglutarate = (R)-2-hydroxyglutarate + acetoacetate. It carries out the reaction 4-hydroxybutanoate + 2-oxoglutarate = (R)-2-hydroxyglutarate + succinate semialdehyde. Functionally, catalyzes the cofactor-independent reversible oxidation of gamma-hydroxybutyrate (GHB) to succinic semialdehyde (SSA) coupled to reduction of 2-ketoglutarate (2-KG) to D-2-hydroxyglutarate (D-2-HG). L-3-hydroxybutyrate (L-3-OHB) is also a substrate for HOT when using 2-KG as hydrogen acceptor, resulting in the formation of D-2-HG. This is Probable hydroxyacid-oxoacid transhydrogenase, mitochondrial (adhfe1) from Dictyostelium discoideum (Social amoeba).